The sequence spans 321 residues: Aspartate carbamoyltransferase catalytic subunit (321 aa).

2 residues coordinate carbamoyl phosphate: R65 and T66. K93 is a binding site for L-aspartate. Positions 115, 143, and 146 each coordinate carbamoyl phosphate. L-aspartate contacts are provided by R176 and R230. Carbamoyl phosphate-binding residues include G271 and P272.

The protein belongs to the aspartate/ornithine carbamoyltransferase superfamily. ATCase family. Heterododecamer (2C3:3R2) of six catalytic PyrB chains organized as two trimers (C3), and six regulatory PyrI chains organized as three dimers (R2).

The enzyme catalyses carbamoyl phosphate + L-aspartate = N-carbamoyl-L-aspartate + phosphate + H(+). Its pathway is pyrimidine metabolism; UMP biosynthesis via de novo pathway; (S)-dihydroorotate from bicarbonate: step 2/3. Its function is as follows. Catalyzes the condensation of carbamoyl phosphate and aspartate to form carbamoyl aspartate and inorganic phosphate, the committed step in the de novo pyrimidine nucleotide biosynthesis pathway. This Bartonella quintana (strain Toulouse) (Rochalimaea quintana) protein is Aspartate carbamoyltransferase catalytic subunit.